We begin with the raw amino-acid sequence, 646 residues long: ATP-dependent zinc metalloprotease FtsH (646 aa).

Residues 1–4 (MTRS) are Cytoplasmic-facing. The helical transmembrane segment at 5-25 (LLWQMVIVLGAILMVNYVLTT) threads the bilayer. Over 26 to 120 (LTPQTQEPVV…VRPESKPSPW (95 aa)) the chain is Periplasmic. The helical transmembrane segment at 121-141 (ATAMIYMLPWLLIVGVWWFVI) threads the bilayer. At 142–646 (KGMRTRQGPG…GELAGGAVEG (505 aa)) the chain is on the cytoplasmic side. 216–223 (GPPGTGKT) lines the ATP pocket. Zn(2+) is bound at residue His437. Residue Glu438 is part of the active site. The Zn(2+) site is built by His441 and Asp513.

It in the central section; belongs to the AAA ATPase family. The protein in the C-terminal section; belongs to the peptidase M41 family. Homohexamer. Requires Zn(2+) as cofactor.

The protein resides in the cell inner membrane. In terms of biological role, acts as a processive, ATP-dependent zinc metallopeptidase for both cytoplasmic and membrane proteins. Plays a role in the quality control of integral membrane proteins. The protein is ATP-dependent zinc metalloprotease FtsH of Syntrophotalea carbinolica (strain DSM 2380 / NBRC 103641 / GraBd1) (Pelobacter carbinolicus).